The following is a 118-amino-acid chain: MQAKAILRHTPTSPRKMRLLAGLVRGKPVDQAKAILLNSTKGASRNVMLTLKSAVANYAQLNPDERVSDQELVVKEVFVDQGATLKRMLPAPMGRAYRVRKRSNHLTVIVDKVKQSSK.

Belongs to the universal ribosomal protein uL22 family. As to quaternary structure, part of the 50S ribosomal subunit.

Its function is as follows. This protein binds specifically to 23S rRNA; its binding is stimulated by other ribosomal proteins, e.g. L4, L17, and L20. It is important during the early stages of 50S assembly. It makes multiple contacts with different domains of the 23S rRNA in the assembled 50S subunit and ribosome. In terms of biological role, the globular domain of the protein is located near the polypeptide exit tunnel on the outside of the subunit, while an extended beta-hairpin is found that lines the wall of the exit tunnel in the center of the 70S ribosome. The chain is Large ribosomal subunit protein uL22 from Chlorobium limicola (strain DSM 245 / NBRC 103803 / 6330).